The primary structure comprises 514 residues: Peptide chain release factor 3 (514 aa).

Residues 8 to 268 (KKRRTFAIIS…TFLEFAPEPH (261 aa)) form the tr-type G domain. GTP-binding positions include 17–24 (SHPDAGKT), 85–89 (DTPGH), and 139–142 (NKLD).

The protein belongs to the TRAFAC class translation factor GTPase superfamily. Classic translation factor GTPase family. PrfC subfamily.

The protein localises to the cytoplasm. Increases the formation of ribosomal termination complexes and stimulates activities of RF-1 and RF-2. It binds guanine nucleotides and has strong preference for UGA stop codons. It may interact directly with the ribosome. The stimulation of RF-1 and RF-2 is significantly reduced by GTP and GDP, but not by GMP. The chain is Peptide chain release factor 3 from Streptococcus agalactiae serotype Ia (strain ATCC 27591 / A909 / CDC SS700).